Consider the following 202-residue polypeptide: Probable thymidylate kinase (202 aa).

Residue 13-20 (GIDGSGKT) coordinates ATP.

The protein belongs to the thymidylate kinase family.

The enzyme catalyses dTMP + ATP = dTDP + ADP. This is Probable thymidylate kinase from Picrophilus torridus (strain ATCC 700027 / DSM 9790 / JCM 10055 / NBRC 100828 / KAW 2/3).